A 370-amino-acid polypeptide reads, in one-letter code: Putative F-box protein At3g10430 (370 aa).

Positions 1 to 47 (MGSSLPFDLILEILQRTPAESLLRFKSTCKKWYELISNDKRFMYKHL) constitute an F-box domain.

In Arabidopsis thaliana (Mouse-ear cress), this protein is Putative F-box protein At3g10430.